Reading from the N-terminus, the 139-residue chain is MSNRTVMGFDFGTKSIGAAIGQEVTGTARPLASFKAKDGIPDWSQIEKIIKEWQPDLVVVGLPLNMDGTEQLVTTQAKKFANRLHGRFGVQIALHDERLSTVEARAHLFEQGGYRSLDKGSVDATSAVIILESWFERQY.

Belongs to the YqgF nuclease family.

The protein resides in the cytoplasm. Functionally, could be a nuclease involved in processing of the 5'-end of pre-16S rRNA. This chain is Putative pre-16S rRNA nuclease, found in Proteus mirabilis (strain HI4320).